A 214-amino-acid chain; its full sequence is Large ribosomal subunit protein uL16-like (214 aa).

It belongs to the universal ribosomal protein uL16 family. In terms of assembly, component of the 60S large ribosomal subunit (LSU).

It localises to the cytoplasm. Functionally, testis-specific component of the ribosome, which is required for the transition from prophase to metaphase in male meiosis I. Compensates for the inactivated X-linked RPL10 paralog during spermatogenesis. The ribosome is a large ribonucleoprotein complex responsible for the synthesis of proteins in the cell. The small ribosomal subunit (SSU) binds messenger RNAs (mRNAs) and translates the encoded message by selecting cognate aminoacyl-transfer RNA (tRNA) molecules. The large subunit (LSU) contains the ribosomal catalytic site termed the peptidyl transferase center (PTC), which catalyzes the formation of peptide bonds, thereby polymerizing the amino acids delivered by tRNAs into a polypeptide chain. The nascent polypeptides leave the ribosome through a tunnel in the LSU and interact with protein factors that function in enzymatic processing, targeting, and the membrane insertion of nascent chains at the exit of the ribosomal tunnel. This chain is Large ribosomal subunit protein uL16-like (RPL10L), found in Bos taurus (Bovine).